A 218-amino-acid chain; its full sequence is Ras-related protein RABA5e (218 aa).

Residue 19–26 (GDSAVGKS) coordinates GTP. Positions 41 to 49 (SKATIGVEF) match the Effector region motif. GTP is bound by residues 67 to 71 (DTAGQ), 125 to 128 (NKCD), and 155 to 156 (SA). S-geranylgeranyl cysteine attachment occurs at residues Cys-214 and Cys-215. Cysteine methyl ester is present on Cys-215. The propeptide at 216–218 (SST) is removed in mature form.

It belongs to the small GTPase superfamily. Rab family.

The protein resides in the cell membrane. Its function is as follows. Intracellular vesicle trafficking and protein transport. In Arabidopsis thaliana (Mouse-ear cress), this protein is Ras-related protein RABA5e (RABA5E).